A 352-amino-acid polypeptide reads, in one-letter code: Holliday junction branch migration complex subunit RuvB (352 aa).

The interval 5 to 191 (TDDFSEQRVI…FGIVARLEFY (187 aa)) is large ATPase domain (RuvB-L). ATP contacts are provided by residues L30, R31, G72, K75, T76, T77, 138-140 (EDY), R181, Y191, and R228. T76 lines the Mg(2+) pocket. Positions 192–262 (TPLELTRIVT…MADAALVMLD (71 aa)) are small ATPAse domain (RuvB-S). The interval 265–352 (PVGFDVMDRK…GPNGELWGGQ (88 aa)) is head domain (RuvB-H). DNA is bound by residues R301, R320, and R325.

The protein belongs to the RuvB family. Homohexamer. Forms an RuvA(8)-RuvB(12)-Holliday junction (HJ) complex. HJ DNA is sandwiched between 2 RuvA tetramers; dsDNA enters through RuvA and exits via RuvB. An RuvB hexamer assembles on each DNA strand where it exits the tetramer. Each RuvB hexamer is contacted by two RuvA subunits (via domain III) on 2 adjacent RuvB subunits; this complex drives branch migration. In the full resolvosome a probable DNA-RuvA(4)-RuvB(12)-RuvC(2) complex forms which resolves the HJ.

The protein resides in the cytoplasm. The enzyme catalyses ATP + H2O = ADP + phosphate + H(+). Functionally, the RuvA-RuvB-RuvC complex processes Holliday junction (HJ) DNA during genetic recombination and DNA repair, while the RuvA-RuvB complex plays an important role in the rescue of blocked DNA replication forks via replication fork reversal (RFR). RuvA specifically binds to HJ cruciform DNA, conferring on it an open structure. The RuvB hexamer acts as an ATP-dependent pump, pulling dsDNA into and through the RuvAB complex. RuvB forms 2 homohexamers on either side of HJ DNA bound by 1 or 2 RuvA tetramers; 4 subunits per hexamer contact DNA at a time. Coordinated motions by a converter formed by DNA-disengaged RuvB subunits stimulates ATP hydrolysis and nucleotide exchange. Immobilization of the converter enables RuvB to convert the ATP-contained energy into a lever motion, pulling 2 nucleotides of DNA out of the RuvA tetramer per ATP hydrolyzed, thus driving DNA branch migration. The RuvB motors rotate together with the DNA substrate, which together with the progressing nucleotide cycle form the mechanistic basis for DNA recombination by continuous HJ branch migration. Branch migration allows RuvC to scan DNA until it finds its consensus sequence, where it cleaves and resolves cruciform DNA. The chain is Holliday junction branch migration complex subunit RuvB from Herminiimonas arsenicoxydans.